Consider the following 199-residue polypeptide: Protein CPL1 (199 aa).

The first 30 residues, 1–30 (MFSIPPSVRRLVFLFLIAAPLLSIVLPVAA), serve as a signal peptide directing secretion. The tract at residues 34–58 (GVDPPSKLQPRAPQPSRRMGATKRS) is disordered. An N-linked (GlcNAc...) asparagine glycan is attached at Asn148.

It is found in the secreted. Virulence factor which promotes fungal virulence by enhancing type 2 inflammation in the mouse host. Likely binds mouse Tlr4 independently of Ly96/Md2 and activates Tlr4 signaling to drive Stat3 phosphorylation in interstitial macrophages, which promotes the initial induction of Arg1/arginase-1 and increases macrophage sensitivity to Il4 signaling. This Cryptococcus neoformans var. grubii serotype A (strain H99 / ATCC 208821 / CBS 10515 / FGSC 9487) (Filobasidiella neoformans var. grubii) protein is Protein CPL1.